Consider the following 118-residue polypeptide: Large ribosomal subunit protein bL19 (118 aa).

Belongs to the bacterial ribosomal protein bL19 family.

Functionally, this protein is located at the 30S-50S ribosomal subunit interface and may play a role in the structure and function of the aminoacyl-tRNA binding site. This Campylobacter fetus subsp. fetus (strain 82-40) protein is Large ribosomal subunit protein bL19.